Here is an 85-residue protein sequence, read N- to C-terminus: Large ribosomal subunit protein bL27 (85 aa).

Residues 1–22 form a disordered region; that stretch reads MAHKKAGGSTKNGRDSESKRLG.

It belongs to the bacterial ribosomal protein bL27 family.

This is Large ribosomal subunit protein bL27 from Idiomarina loihiensis (strain ATCC BAA-735 / DSM 15497 / L2-TR).